The primary structure comprises 363 residues: Spermidine/putrescine import ATP-binding protein PotA (363 aa).

The ABC transporter domain maps to L6–I236. G38–T45 contacts ATP.

The protein belongs to the ABC transporter superfamily. Spermidine/putrescine importer (TC 3.A.1.11.1) family. In terms of assembly, the complex is composed of two ATP-binding proteins (PotA), two transmembrane proteins (PotB and PotC) and a solute-binding protein (PotD).

It localises to the cell inner membrane. The enzyme catalyses ATP + H2O + polyamine-[polyamine-binding protein]Side 1 = ADP + phosphate + polyamineSide 2 + [polyamine-binding protein]Side 1.. Part of the ABC transporter complex PotABCD involved in spermidine/putrescine import. Responsible for energy coupling to the transport system. The polypeptide is Spermidine/putrescine import ATP-binding protein PotA (Pseudomonas aeruginosa (strain UCBPP-PA14)).